Here is a 90-residue protein sequence, read N- to C-terminus: HssA/B-like protein 4 (90 aa).

This sequence belongs to the hssA/B family.

This Dictyostelium discoideum (Social amoeba) protein is HssA/B-like protein 4 (hssl4).